The primary structure comprises 220 residues: Flagellin A2 (220 aa).

Positions 1-11 are excised as a propeptide; sequence MFNNITDDDRG. N-linked (GlcNAc...) asparagine glycans are attached at residues asparagine 78, asparagine 95, asparagine 112, and asparagine 124.

Belongs to the archaeal flagellin family. In terms of processing, glycosylated by a pentasaccharide similar to the S-layer glycoprotein, probably comprising a hexose, 2 hexuronic acids, a methyl ester of a hexuronic acid and mannose.

The protein resides in the archaeal flagellum. In terms of biological role, flagellin that plays both structural and regulatory roles in flagella biosynthesis. Does not constitute a major flagellin in terms of abundance contrary to FlgA1: may regulate the flagella-dependent swimming motility depending on the relative abundance of FlgA1. Not involved in PibD-dependent surface adhesion. The protein is Flagellin A2 (flgA2) of Haloferax volcanii (strain ATCC 29605 / DSM 3757 / JCM 8879 / NBRC 14742 / NCIMB 2012 / VKM B-1768 / DS2) (Halobacterium volcanii).